Here is a 138-residue protein sequence, read N- to C-terminus: Large ribosomal subunit protein bL17 (138 aa).

The protein belongs to the bacterial ribosomal protein bL17 family. In terms of assembly, part of the 50S ribosomal subunit. Contacts protein L32.

This Bradyrhizobium diazoefficiens (strain JCM 10833 / BCRC 13528 / IAM 13628 / NBRC 14792 / USDA 110) protein is Large ribosomal subunit protein bL17.